We begin with the raw amino-acid sequence, 179 residues long: Large ribosomal subunit protein uL5 (179 aa).

It belongs to the universal ribosomal protein uL5 family. Part of the 50S ribosomal subunit; part of the 5S rRNA/L5/L18/L25 subcomplex. Contacts the 5S rRNA and the P site tRNA. Forms a bridge to the 30S subunit in the 70S ribosome.

Functionally, this is one of the proteins that bind and probably mediate the attachment of the 5S RNA into the large ribosomal subunit, where it forms part of the central protuberance. In the 70S ribosome it contacts protein S13 of the 30S subunit (bridge B1b), connecting the 2 subunits; this bridge is implicated in subunit movement. Contacts the P site tRNA; the 5S rRNA and some of its associated proteins might help stabilize positioning of ribosome-bound tRNAs. In Xylella fastidiosa (strain M23), this protein is Large ribosomal subunit protein uL5.